The chain runs to 393 residues: Dual specificity mitogen-activated protein kinase kinase 1 (393 aa).

A disordered region spans residues 1-26; sequence MPKKKPTPIQLNPTPDGSAVNGTSSA. Residues 9–26 are compositionally biased toward polar residues; that stretch reads IQLNPTPDGSAVNGTSSA. In terms of domain architecture, Protein kinase spans 68 to 361; sequence FEKISELGAG…LKQLLVHAFI (294 aa). Residues 74-82 and Lys97 each bind ATP; that span reads LGAGNGGVV. The active-site Proton acceptor is Asp190. Phosphoserine; by RAF occurs at positions 218 and 222. An RAF1-binding region spans residues 270–307; it reads ELELLFGCQVEGDAAETPPRPRTPGRPLSSYGMDSRPP. Thr286 carries the phosphothreonine modification. Position 292 is a phosphothreonine; by MAPK1 (Thr292). Residue Ser298 is modified to Phosphoserine; by PAK.

Belongs to the protein kinase superfamily. STE Ser/Thr protein kinase family. MAP kinase kinase subfamily. Found in a complex with at least BRAF, HRAS, MAP2K1, MAPK3/ERK1 and RGS14. Forms a heterodimer with MAP2K2/MEK2. Forms heterodimers with KSR2 which further dimerize to form tetramers. Interacts with KSR1 or KSR2 and BRAF; the interaction with KSR1 or KSR2 mediates KSR1-BRAF or KSR2-BRAF dimerization. Interacts with ARBB2, LAMTOR3, MAPK1/ERK2 and RAF1. Interacts with MAPK1/ERK2. Interacts with MORG1. Interacts with PPARG. Interacts with isoform 1 of VRK2. Interacts with SGK1. Interacts with BIRC6/bruce. Interacts with KAT7; the interaction promotes KAT7 phosphorylation. Interacts with RAF1 and NEK10; the interaction is required for ERK1/2-signaling pathway activation in response to UV irradiation. Interacts with TRAF3IP3. Interacts with MOS. Phosphorylation at Ser-218 and Ser-222 by MAP kinase kinase kinases (BRAF or MEKK1) positively regulates the kinase activity. Also phosphorylated at Thr-292 by MAPK1/ERK2 and at Ser-298 by PAK. MAPK1/ERK2 phosphorylation of Thr-292 occurs in response to cellular adhesion and leads to inhibition of Ser-298 phosphorylation by PAK. Autophosphorylated at Ser-218 and Ser-222, autophosphosphorylation is promoted by NEK10 following UV irradiation.

The protein localises to the cytoplasm. It is found in the cytoskeleton. Its subcellular location is the microtubule organizing center. It localises to the centrosome. The protein resides in the spindle pole body. The protein localises to the nucleus. It is found in the membrane. It catalyses the reaction L-seryl-[protein] + ATP = O-phospho-L-seryl-[protein] + ADP + H(+). It carries out the reaction L-threonyl-[protein] + ATP = O-phospho-L-threonyl-[protein] + ADP + H(+). The catalysed reaction is L-tyrosyl-[protein] + ATP = O-phospho-L-tyrosyl-[protein] + ADP + H(+). With respect to regulation, ras proteins such as HRAS mediate the activation of RAF proteins such as RAF1 or BRAF which in turn activate extracellular signal-regulated kinases (ERK) through MAPK (mitogen-activated protein kinases) and ERK kinases MAP2K1/MEK1 and MAP2K2/MEK2. Activation occurs through phosphorylation of Ser-218 and Ser-222. MAP2K1/MEK1 binds KSR1 or KSR2 releasing the inhibitory intramolecular interaction between KSR1 or KSR2 protein kinase and N-terminal domains. This allows KSR1 or KSR2 dimerization with BRAF leading to BRAF activation and phosphorylation of MAP2K1. MAP2K1/MEK1 is also the target of negative feed-back regulation by its substrate kinases, such as MAPK1/ERK2. These phosphorylate MAP2K1/MEK1 on Thr-292, thereby facilitating dephosphorylation of the activating residues Ser-218 and Ser-222. Inhibited by serine/threonine phosphatase 2A. Its function is as follows. Dual specificity protein kinase which acts as an essential component of the MAP kinase signal transduction pathway. Binding of extracellular ligands such as growth factors, cytokines and hormones to their cell-surface receptors activates RAS and this initiates RAF1 activation. RAF1 then further activates the dual-specificity protein kinases MAP2K1/MEK1 and MAP2K2/MEK2. Both MAP2K1/MEK1 and MAP2K2/MEK2 function specifically in the MAPK/ERK cascade, and catalyze the concomitant phosphorylation of a threonine and a tyrosine residue in a Thr-Glu-Tyr sequence located in the extracellular signal-regulated kinases MAPK3/ERK1 and MAPK1/ERK2, leading to their activation and further transduction of the signal within the MAPK/ERK cascade. Activates BRAF in a KSR1 or KSR2-dependent manner; by binding to KSR1 or KSR2 releases the inhibitory intramolecular interaction between KSR1 or KSR2 protein kinase and N-terminal domains which promotes KSR1 or KSR2-BRAF dimerization and BRAF activation. Depending on the cellular context, this pathway mediates diverse biological functions such as cell growth, adhesion, survival and differentiation, predominantly through the regulation of transcription, metabolism and cytoskeletal rearrangements. One target of the MAPK/ERK cascade is peroxisome proliferator-activated receptor gamma (PPARG), a nuclear receptor that promotes differentiation and apoptosis. MAP2K1/MEK1 has been shown to export PPARG from the nucleus. The MAPK/ERK cascade is also involved in the regulation of endosomal dynamics, including lysosome processing and endosome cycling through the perinuclear recycling compartment (PNRC), as well as in the fragmentation of the Golgi apparatus during mitosis. This is Dual specificity mitogen-activated protein kinase kinase 1 (MAP2K1) from Cricetulus griseus (Chinese hamster).